We begin with the raw amino-acid sequence, 676 residues long: UvrABC system protein B (676 aa).

The 389-residue stretch at 26–414 (EGLDAGLAHQ…SAGEIADQVV (389 aa)) folds into the Helicase ATP-binding domain. 39 to 46 (GVTGSGKT) is a binding site for ATP. The Beta-hairpin motif lies at 92 to 115 (YYDYYQPEAYVPTTDTFIEKDSSV). The Helicase C-terminal domain occupies 432-598 (QVDDLLSEIR…ALKRNIKDIM (167 aa)). One can recognise a UVR domain in the interval 636 to 671 (EKEITKLEAQMYKHAQDLEFELAAQKRDEIEKLRQQ).

This sequence belongs to the UvrB family. Forms a heterotetramer with UvrA during the search for lesions. Interacts with UvrC in an incision complex.

The protein localises to the cytoplasm. Its function is as follows. The UvrABC repair system catalyzes the recognition and processing of DNA lesions. A damage recognition complex composed of 2 UvrA and 2 UvrB subunits scans DNA for abnormalities. Upon binding of the UvrA(2)B(2) complex to a putative damaged site, the DNA wraps around one UvrB monomer. DNA wrap is dependent on ATP binding by UvrB and probably causes local melting of the DNA helix, facilitating insertion of UvrB beta-hairpin between the DNA strands. Then UvrB probes one DNA strand for the presence of a lesion. If a lesion is found the UvrA subunits dissociate and the UvrB-DNA preincision complex is formed. This complex is subsequently bound by UvrC and the second UvrB is released. If no lesion is found, the DNA wraps around the other UvrB subunit that will check the other stand for damage. In Vibrio vulnificus (strain CMCP6), this protein is UvrABC system protein B.